The primary structure comprises 946 residues: Inter-alpha-trypsin inhibitor heavy chain H2 (946 aa).

The signal sequence occupies residues 1 to 18; that stretch reads MQRPVCLLIWLFLLEAQA. A propeptide spanning residues 19 to 54 is cleaved from the precursor; it reads FEIPINGNSEFAEYSDLVELAPDKLPFVQENGRHQR. The region spanning 56–185 is the VIT domain; it reads LPEESGEETD…KVQFELHYQE (130 aa). A Phosphoserine modification is found at Ser-60. N-linked (GlcNAc...) asparagine glycosylation is found at Asn-118 and Asn-263. 4-carboxyglutamate is present on residues Glu-282 and Glu-283. A VWFA domain is found at 308–468; that stretch reads PKNILFVIDV…YDFLKRLSNE (161 aa). The N-linked (GlcNAc...) asparagine glycan is linked to Asn-445. Ser-466 is modified (phosphoserine). An Aspartate 1-(chondroitin 4-sulfate)-ester modification is found at Asp-702. A propeptide spanning residues 703 to 946 is cleaved from the precursor; that stretch reads PHFIIYLPKS…PQLYSFLKRP (244 aa). Ser-886 is modified (phosphoserine).

The protein belongs to the ITIH family. I-alpha-I plasma protease inhibitors are assembled from one or two heavy chains (HC) and one light chain, bikunin. Inter-alpha-inhibitor (I-alpha-I) is composed of ITIH1/HC1, ITIH2/HC2 and bikunin. Post-translationally, heavy chains are linked to bikunin via chondroitin 4-sulfate esterified to the alpha-carboxyl of the C-terminal aspartate after propeptide cleavage. In terms of processing, phosphorylated by FAM20C in the extracellular medium. In terms of tissue distribution, expressed in both liver and brain.

The protein resides in the secreted. Functionally, may act as a carrier of hyaluronan in serum or as a binding protein between hyaluronan and other matrix protein, including those on cell surfaces in tissues to regulate the localization, synthesis and degradation of hyaluronan which are essential to cells undergoing biological processes. The polypeptide is Inter-alpha-trypsin inhibitor heavy chain H2 (Itih2) (Mus musculus (Mouse)).